We begin with the raw amino-acid sequence, 940 residues long: UvrABC system protein A (940 aa).

31 to 38 is a binding site for ATP; the sequence is GLSGSGKS. The C4-type zinc finger occupies 252 to 279; that stretch reads CPQCGYSMQELEPRLFSFNNPAGACGTC. ABC transporter domains are found at residues 309–586 and 606–936; these read WDQK…PNSL and RDPK…RFLK. ATP is bound at residue 639–646; it reads GVSGSGKS. The C4-type zinc finger occupies 739-765; it reads CEACQGDGVIKVEMHFLPDVYVPCDVC.

It belongs to the ABC transporter superfamily. UvrA family. In terms of assembly, forms a heterotetramer with UvrB during the search for lesions.

The protein localises to the cytoplasm. Its function is as follows. The UvrABC repair system catalyzes the recognition and processing of DNA lesions. UvrA is an ATPase and a DNA-binding protein. A damage recognition complex composed of 2 UvrA and 2 UvrB subunits scans DNA for abnormalities. When the presence of a lesion has been verified by UvrB, the UvrA molecules dissociate. The polypeptide is UvrABC system protein A (Vibrio parahaemolyticus serotype O3:K6 (strain RIMD 2210633)).